Here is a 309-residue protein sequence, read N- to C-terminus: Mitochondrial import receptor subunit TOM34 (309 aa).

TPR repeat units follow at residues 9-42 (VEEL…LQAQ), 51-84 (SVLY…VPFS), and 86-118 (KPLL…DDSV). Phosphoserine is present on Ser-160. A disordered region spans residues 161-189 (LPSENHKEMAKSKSKETTATKNRVPSAGD). The segment covering 164–178 (ENHKEMAKSKSKETT) has biased composition (basic and acidic residues). Residue Ser-186 is modified to Phosphoserine. TPR repeat units follow at residues 193 to 226 (AKVL…SNLE), 227 to 260 (SATY…DGKN), and 262 to 294 (KAFY…EPRN). A Glycyl lysine isopeptide (Lys-Gly) (interchain with G-Cter in SUMO2) cross-link involves residue Lys-197.

It belongs to the Tom34 family. In terms of assembly, interacts with HSP90A, VCP, ATP6V1D, KIAA0665, AMPK, and DMAP1 through its TPR repeat.

Its subcellular location is the cytoplasm. It is found in the mitochondrion outer membrane. In terms of biological role, plays a role in the import of cytosolically synthesized preproteins into mitochondria. Binds the mature portion of precursor proteins. Interacts with cellular components, and possesses weak ATPase activity. May be a chaperone-like protein that helps to keep newly synthesized precursors in an unfolded import compatible state. The protein is Mitochondrial import receptor subunit TOM34 (TOMM34) of Pongo abelii (Sumatran orangutan).